A 101-amino-acid polypeptide reads, in one-letter code: Small ribosomal subunit protein uS14 (101 aa).

Belongs to the universal ribosomal protein uS14 family. As to quaternary structure, part of the 30S ribosomal subunit. Contacts proteins S3 and S10.

Functionally, binds 16S rRNA, required for the assembly of 30S particles and may also be responsible for determining the conformation of the 16S rRNA at the A site. In Orientia tsutsugamushi (strain Ikeda) (Rickettsia tsutsugamushi), this protein is Small ribosomal subunit protein uS14.